The following is a 284-amino-acid chain: Phosphoenolpyruvate guanylyltransferase (284 aa).

Residues 94 to 123 are disordered; the sequence is ADLSADEPAGTDAERRADPSAENRASTSAQ. Residues 105-114 are compositionally biased toward basic and acidic residues; sequence DAERRADPSA. Phosphoenolpyruvate-binding residues include threonine 203, glycine 219, and serine 222.

Belongs to the CofC family.

It catalyses the reaction phosphoenolpyruvate + GTP + H(+) = enolpyruvoyl-2-diphospho-5'-guanosine + diphosphate. It participates in cofactor biosynthesis; coenzyme F420 biosynthesis. Functionally, guanylyltransferase that catalyzes the activation of phosphoenolpyruvate (PEP) as enolpyruvoyl-2-diphospho-5'-guanosine, via the condensation of PEP with GTP. It is involved in the biosynthesis of coenzyme F420, a hydride carrier cofactor. The chain is Phosphoenolpyruvate guanylyltransferase from Sanguibacter keddieii (strain ATCC 51767 / DSM 10542 / NCFB 3025 / ST-74).